Here is a 455-residue protein sequence, read N- to C-terminus: Bifunctional protein GlmU (455 aa).

Positions 1-232 are pyrophosphorylase; the sequence is MASTTGALIL…DPNLLGVNNP (232 aa). UDP-N-acetyl-alpha-D-glucosamine contacts are provided by residues 10–13, Lys-24, Gln-75, and 80–81; these read LAAG and GT. Asp-106 is a Mg(2+) binding site. UDP-N-acetyl-alpha-D-glucosamine is bound by residues Gly-141, Glu-155, Asn-172, and Asn-230. Asn-230 contacts Mg(2+). The segment at 233–253 is linker; the sequence is AELIRSEALLRTRLVIGHIEG. The N-acetyltransferase stretch occupies residues 254-455; it reads GVLIHAPETV…QTNLPRKPKA (202 aa). Arg-336 and Lys-354 together coordinate UDP-N-acetyl-alpha-D-glucosamine. His-366 acts as the Proton acceptor in catalysis. Positions 369 and 380 each coordinate UDP-N-acetyl-alpha-D-glucosamine. Acetyl-CoA-binding positions include Ala-383, 389-390, Ser-408, Ala-426, and Arg-443; that span reads NY.

This sequence in the N-terminal section; belongs to the N-acetylglucosamine-1-phosphate uridyltransferase family. The protein in the C-terminal section; belongs to the transferase hexapeptide repeat family. As to quaternary structure, homotrimer. Requires Mg(2+) as cofactor.

It localises to the cytoplasm. The enzyme catalyses alpha-D-glucosamine 1-phosphate + acetyl-CoA = N-acetyl-alpha-D-glucosamine 1-phosphate + CoA + H(+). The catalysed reaction is N-acetyl-alpha-D-glucosamine 1-phosphate + UTP + H(+) = UDP-N-acetyl-alpha-D-glucosamine + diphosphate. The protein operates within nucleotide-sugar biosynthesis; UDP-N-acetyl-alpha-D-glucosamine biosynthesis; N-acetyl-alpha-D-glucosamine 1-phosphate from alpha-D-glucosamine 6-phosphate (route II): step 2/2. It functions in the pathway nucleotide-sugar biosynthesis; UDP-N-acetyl-alpha-D-glucosamine biosynthesis; UDP-N-acetyl-alpha-D-glucosamine from N-acetyl-alpha-D-glucosamine 1-phosphate: step 1/1. It participates in bacterial outer membrane biogenesis; LPS lipid A biosynthesis. Functionally, catalyzes the last two sequential reactions in the de novo biosynthetic pathway for UDP-N-acetylglucosamine (UDP-GlcNAc). The C-terminal domain catalyzes the transfer of acetyl group from acetyl coenzyme A to glucosamine-1-phosphate (GlcN-1-P) to produce N-acetylglucosamine-1-phosphate (GlcNAc-1-P), which is converted into UDP-GlcNAc by the transfer of uridine 5-monophosphate (from uridine 5-triphosphate), a reaction catalyzed by the N-terminal domain. In Nitratidesulfovibrio vulgaris (strain ATCC 29579 / DSM 644 / CCUG 34227 / NCIMB 8303 / VKM B-1760 / Hildenborough) (Desulfovibrio vulgaris), this protein is Bifunctional protein GlmU.